A 267-amino-acid polypeptide reads, in one-letter code: MSVAAGGPAGAAIPESRLMALGILGGLAGIYASAVNPVIGPVLASLGAVCAIVWGADAIRRVASYGLGTGVPSIGYMSVSIGIVGVVAGLASVFVVPAIAVPVVALILAMILGVVVAVLGKKIVKMKIPILEKCTAEISGAAALSVLGFSAAIAGSYTLQTMLTSVITTGFIGLLFILNTMAIQHPFNACLGPNENQTRTLKLAASTGFISMAIVGLLGIGLNPSWWLVSLIGALCWIVAFRAFVSASFEEAASVKWSGLWPKEEEH.

The next 8 membrane-spanning stretches (helical) occupy residues 18 to 38 (LMALGILGGLAGIYASAVNPV), 39 to 59 (IGPVLASLGAVCAIVWGADAI), 76 to 96 (YMSVSIGIVGVVAGLASVFVV), 99 to 119 (IAVPVVALILAMILGVVVAVL), 138 to 158 (ISGAAALSVLGFSAAIAGSYT), 163 to 183 (LTSVITTGFIGLLFILNTMAI), 209 to 229 (FISMAIVGLLGIGLNPSWWLV), and 230 to 250 (SLIGALCWIVAFRAFVSASFE).

The protein belongs to the MtrC family. The complex is composed of 8 subunits; MtrA, MtrB, MtrC, MtrD, MtrE, MtrF, MtrG and MtrH.

The protein localises to the cell membrane. It catalyses the reaction 5-methyl-5,6,7,8-tetrahydromethanopterin + coenzyme M + 2 Na(+)(in) = 5,6,7,8-tetrahydromethanopterin + methyl-coenzyme M + 2 Na(+)(out). It functions in the pathway one-carbon metabolism; methanogenesis from CO(2); methyl-coenzyme M from 5,10-methylene-5,6,7,8-tetrahydromethanopterin: step 2/2. Part of a complex that catalyzes the formation of methyl-coenzyme M and tetrahydromethanopterin from coenzyme M and methyl-tetrahydromethanopterin. This is an energy-conserving, sodium-ion translocating step. The protein is Tetrahydromethanopterin S-methyltransferase subunit C of Methanothermobacter marburgensis (strain ATCC BAA-927 / DSM 2133 / JCM 14651 / NBRC 100331 / OCM 82 / Marburg) (Methanobacterium thermoautotrophicum).